A 400-amino-acid chain; its full sequence is Argininosuccinate synthase (400 aa).

Residue 8–16 (AYSGGLDTS) coordinates ATP. Positions 87 and 92 each coordinate L-citrulline. Gly117 is an ATP binding site. Residues Thr119, Asn123, and Asp124 each contribute to the L-aspartate site. Asn123 contacts L-citrulline. L-citrulline contacts are provided by Arg127, Ser175, Glu259, and Tyr271.

Belongs to the argininosuccinate synthase family. Type 1 subfamily. As to quaternary structure, homotetramer.

The protein localises to the cytoplasm. It carries out the reaction L-citrulline + L-aspartate + ATP = 2-(N(omega)-L-arginino)succinate + AMP + diphosphate + H(+). It participates in amino-acid biosynthesis; L-arginine biosynthesis; L-arginine from L-ornithine and carbamoyl phosphate: step 2/3. In Frankia casuarinae (strain DSM 45818 / CECT 9043 / HFP020203 / CcI3), this protein is Argininosuccinate synthase.